The following is a 724-amino-acid chain: Threonine--tRNA ligase 2, cytoplasmic (724 aa).

Position 2 is an N-acetylalanine (A2). The stretch at 44-72 (QAEGPCLTREVAQLRAENRELRHCLYRLR) forms a coiled coil. Residues 90-112 (RAEAGRAAAGAQPPPSQSLEEDV) form a disordered region. The TGS domain occupies 155–220 (DSSNVITVRV…EGDATVELLT (66 aa)). S451 bears the Phosphoserine mark.

This sequence belongs to the class-II aminoacyl-tRNA synthetase family. As to quaternary structure, may be a component of the multisynthetase complex (MSC), a large multi-subunit complex which contains at least eight different aminoacyl-tRNA synthetases plus three auxillary subunits AIMP1, AIMP2 and EEF1E1. Interacts with the MSC components EPRS1, AIMP1, AIMP2 and KARS1.

It localises to the cytoplasm. Its subcellular location is the nucleus. The enzyme catalyses tRNA(Thr) + L-threonine + ATP = L-threonyl-tRNA(Thr) + AMP + diphosphate + H(+). Its function is as follows. Catalyzes the attachment of threonine to tRNA(Thr) in a two-step reaction: threonine is first activated by ATP to form Thr-AMP and then transferred to the acceptor end of tRNA(Thr). Also edits incorrectly charged tRNA(Thr) via its editing domain, at the post-transfer stage. This chain is Threonine--tRNA ligase 2, cytoplasmic (TARS3), found in Bos taurus (Bovine).